The primary structure comprises 274 residues: 2-dehydro-3-deoxyphosphooctonate aldolase (274 aa).

The protein belongs to the KdsA family.

It localises to the cytoplasm. It carries out the reaction D-arabinose 5-phosphate + phosphoenolpyruvate + H2O = 3-deoxy-alpha-D-manno-2-octulosonate-8-phosphate + phosphate. Its pathway is carbohydrate biosynthesis; 3-deoxy-D-manno-octulosonate biosynthesis; 3-deoxy-D-manno-octulosonate from D-ribulose 5-phosphate: step 2/3. The protein operates within bacterial outer membrane biogenesis; lipopolysaccharide biosynthesis. The chain is 2-dehydro-3-deoxyphosphooctonate aldolase from Rickettsia bellii (strain OSU 85-389).